Consider the following 420-residue polypeptide: Exodeoxyribonuclease 7 large subunit (420 aa).

It belongs to the XseA family. Heterooligomer composed of large and small subunits.

It localises to the cytoplasm. It carries out the reaction Exonucleolytic cleavage in either 5'- to 3'- or 3'- to 5'-direction to yield nucleoside 5'-phosphates.. Its function is as follows. Bidirectionally degrades single-stranded DNA into large acid-insoluble oligonucleotides, which are then degraded further into small acid-soluble oligonucleotides. This Helicobacter pylori (strain G27) protein is Exodeoxyribonuclease 7 large subunit.